Reading from the N-terminus, the 30-residue chain is ALWKNMLKGIGKLAGKAALGAVKKLVGAES.

Belongs to the frog skin active peptide (FSAP) family. Dermaseptin subfamily. In terms of assembly, monomer and oligomer. Forms aggregates in aqueous environments. As to expression, expressed by the skin glands.

The protein resides in the secreted. Potent antimicrobial peptide with activity against bacteria and protozoa. Also has activity against fungi. Probably acts by disturbing membrane functions with its amphipathic structure. Binds to healthy erythrocytes (this binding is receptor independent), but has very weak hemolytic activity. Does not bind to P.falciparum infected erythrocytes, but accumulates within the parasite. Kills the parasite, but has no hemolytic activity on the host cell. The polypeptide is Dermaseptin-S3 (Phyllomedusa sauvagei (Sauvage's leaf frog)).